The following is a 378-amino-acid chain: Leukocyte elastase inhibitor (378 aa).

Met1 carries the N-acetylmethionine modification. The residue at position 137 (Lys137) is an N6-acetyllysine. The residue at position 299 (Ser299) is a Phosphoserine. A CARD-binding motif (CBM) region spans residues 350–378; the sequence is DFIADHPFIFFIRHNPSSNILFLGRLSSP.

Belongs to the serpin family. Ov-serpin subfamily. In terms of assembly, monomer. Interacts (via C-terminus) with CASP1; CASP4 (via CARD domain) and CASP5; these interactions regulate the activity of inflammatory caspases. Interacts with PRTN3. Interacts with GZMH.

The protein localises to the secreted. The protein resides in the cytoplasm. Its subcellular location is the cytolytic granule. It is found in the early endosome. In terms of biological role, neutrophil serine protease inhibitor that plays an essential role in the regulation of the innate immune response, inflammation and cellular homeostasis. Acts primarily to protect the cell from proteases released in the cytoplasm during stress or infection. These proteases are important in killing microbes but when released from granules, these potent enzymes also destroy host proteins and contribute to mortality. Regulates the activity of the neutrophil proteases elastase, cathepsin G, proteinase-3, chymase, chymotrypsin, and kallikrein-3. Also acts as a potent intracellular inhibitor of GZMH by directly blocking its proteolytic activity. During inflammation, limits the activity of inflammatory caspases CASP1, CASP4 and CASP5 by suppressing their caspase-recruitment domain (CARD) oligomerization and enzymatic activation. When secreted, promotes the proliferation of beta-cells via its protease inhibitory function. May be cleaved leading to a loss of its anti-protease activity and to the appearance of an endonuclease activity. However no catalytic site was identified. In Sus scrofa (Pig), this protein is Leukocyte elastase inhibitor (SERPINB1).